Reading from the N-terminus, the 465-residue chain is tRNA (guanine(37)-N(1))-methyltransferase (465 aa).

The N-terminal 20 residues, 1-20 (MDKNSQLRDMNLFRAPAARA), are a transit peptide targeting the mitochondrion. S-adenosyl-L-methionine-binding positions include His-238 and 304 to 305 (DG). Residues 326–345 (AVIKPPRPPRKSAAPPPEPV) are disordered. Asn-359 lines the S-adenosyl-L-methionine pocket.

The protein belongs to the class I-like SAM-binding methyltransferase superfamily. TRM5/TYW2 family. As to quaternary structure, monomer.

The protein localises to the mitochondrion matrix. It localises to the nucleus. Its subcellular location is the cytoplasm. It catalyses the reaction guanosine(37) in tRNA + S-adenosyl-L-methionine = N(1)-methylguanosine(37) in tRNA + S-adenosyl-L-homocysteine + H(+). Its function is as follows. Specifically methylates the N1 position of guanosine-37 in various cytoplasmic and mitochondrial tRNAs. Methylation is not dependent on the nature of the nucleoside 5' of the target nucleoside. This is the first step in the biosynthesis of wybutosine (yW), a modified base adjacent to the anticodon of tRNAs and required for accurate decoding. The sequence is that of tRNA (guanine(37)-N(1))-methyltransferase from Fusarium vanettenii (strain ATCC MYA-4622 / CBS 123669 / FGSC 9596 / NRRL 45880 / 77-13-4) (Fusarium solani subsp. pisi).